Reading from the N-terminus, the 440-residue chain is Mitochondrial translation factor 2 (440 aa).

The transit peptide at 1–15 (MIRTSSILKNCNYRY) directs the protein to the mitochondrion.

It localises to the mitochondrion matrix. Its function is as follows. Required for the processing and/or for the stability of the CYTB and COX1 intron-containing pre-mRNAs and of the ATP6 transcript. Could be a stem-loop RNA-binding protein that plays a role in determining RNA stability. The sequence is that of Mitochondrial translation factor 2 (MTF2) from Saccharomyces cerevisiae (strain ATCC 204508 / S288c) (Baker's yeast).